A 121-amino-acid chain; its full sequence is Small ribosomal subunit protein bS6 (121 aa).

This sequence belongs to the bacterial ribosomal protein bS6 family.

Binds together with bS18 to 16S ribosomal RNA. The protein is Small ribosomal subunit protein bS6 of Rickettsia felis (strain ATCC VR-1525 / URRWXCal2) (Rickettsia azadi).